Reading from the N-terminus, the 192-residue chain is MIPDDEFIKNPSVPGPTAMEVRCLIMCLAEPGKNDVAVDVGCGTGGVTLELAGRVRRVYAIDRNPEAISTTEMNLQRHGLGDNVTLMEGDAPEALCKIPDIDIAVVGGSGGELQEILRIIKDKLKPGGRIIVTAILLETKFEAMECLRDLGFDVNITELNIARGRALDRGTMMVSRNPVALIYTGVSHENKD.

S-adenosyl-L-methionine contacts are provided by residues threonine 17, 41-45 (GCGTG), aspartate 62, and alanine 91.

This sequence belongs to the methyltransferase superfamily. Archaeal-type CbiT family. Homotetramer.

It carries out the reaction Co-precorrin-6B + S-adenosyl-L-methionine = Co-precorrin-7 + S-adenosyl-L-homocysteine + CO2. Its pathway is cofactor biosynthesis; adenosylcobalamin biosynthesis; cob(II)yrinate a,c-diamide from sirohydrochlorin (anaerobic route): step 8/10. Functionally, catalyzes the methylation of C-15 in cobalt-precorrin-6B followed by the decarboxylation of C-12 to form cobalt-precorrin-7. This Methanothermobacter thermautotrophicus (strain ATCC 29096 / DSM 1053 / JCM 10044 / NBRC 100330 / Delta H) (Methanobacterium thermoautotrophicum) protein is Probable cobalt-precorrin-6B C(15)-methyltransferase (decarboxylating).